A 664-amino-acid polypeptide reads, in one-letter code: Xyloglucan-specific galacturonosyltransferase 1 (664 aa).

The segment covering Met-1–Asn-21 has biased composition (basic residues). A disordered region spans residues Met-1–Leu-49. Over Met-1–Arg-71 the chain is Cytoplasmic. A helical; Signal-anchor for type II membrane protein transmembrane segment spans residues Val-72–Ile-92. Topologically, residues Ser-93–Val-664 are lumenal. 7 N-linked (GlcNAc...) asparagine glycosylation sites follow: Asn-126, Asn-158, Asn-175, Asn-181, Asn-355, Asn-379, and Asn-522.

It belongs to the glycosyltransferase 47 family. Root hair specific. Expressed in roots and young leaves.

It is found in the golgi apparatus membrane. Xyloglucan-specific galacturonosyltransferase that forms the beta-D-galactosyluronic acid-(1-&gt;2)-alpha-D-xylosyl linkage. Required for root hair development probably by providing important acidic xyloglucans. This Arabidopsis thaliana (Mouse-ear cress) protein is Xyloglucan-specific galacturonosyltransferase 1.